We begin with the raw amino-acid sequence, 133 residues long: Small ribosomal subunit protein uS11 (133 aa).

The protein belongs to the universal ribosomal protein uS11 family. In terms of assembly, part of the 30S ribosomal subunit. Interacts with proteins S7 and S18. Binds to IF-3.

Its function is as follows. Located on the platform of the 30S subunit, it bridges several disparate RNA helices of the 16S rRNA. Forms part of the Shine-Dalgarno cleft in the 70S ribosome. This chain is Small ribosomal subunit protein uS11, found in Methylibium petroleiphilum (strain ATCC BAA-1232 / LMG 22953 / PM1).